A 111-amino-acid polypeptide reads, in one-letter code: Short neuropeptide F (111 aa).

The first 24 residues, 1–24 (MSAMYAKRCAALVLLVVTVGLVNA), serve as a signal peptide directing secretion. The propeptide occupies 25-76 (TENYMDYGEEMAEKTPAENIHELYRLLLQRNTLDNAGFGGIPLEHLMIRKSQ). The residue at position 85 (Phe85) is a Phenylalanine amide. Positions 88–111 (SGPHVSARALPRPMGAVAGYDDNN) are excised as a propeptide.

As to expression, expressed throughout the central nervous system (at protein level).

It localises to the secreted. Its function is as follows. Plays a role in controlling food intake and regulating body size. This is Short neuropeptide F from Camponotus floridanus (Florida carpenter ant).